The following is a 140-amino-acid chain: Large ribosomal subunit protein bL17 (140 aa).

The segment at 119-140 (DTTAKGQDSGPVQVEEQENEEA) is disordered.

Belongs to the bacterial ribosomal protein bL17 family. In terms of assembly, part of the 50S ribosomal subunit. Contacts protein L32.

The chain is Large ribosomal subunit protein bL17 from Zymomonas mobilis subsp. mobilis (strain ATCC 31821 / ZM4 / CP4).